The sequence spans 426 residues: Diaminobutyrate--2-oxoglutarate transaminase (426 aa).

The residue at position 274 (Lys-274) is an N6-(pyridoxal phosphate)lysine.

The protein belongs to the class-III pyridoxal-phosphate-dependent aminotransferase family. Requires pyridoxal 5'-phosphate as cofactor.

The enzyme catalyses L-2,4-diaminobutanoate + 2-oxoglutarate = L-aspartate 4-semialdehyde + L-glutamate. Its pathway is amine and polyamine biosynthesis; ectoine biosynthesis; L-ectoine from L-aspartate 4-semialdehyde: step 1/3. Functionally, catalyzes reversively the conversion of L-aspartate beta-semialdehyde (ASA) to L-2,4-diaminobutyrate (DABA) by transamination with L-glutamate. The sequence is that of Diaminobutyrate--2-oxoglutarate transaminase (ectB) from Oceanobacillus iheyensis (strain DSM 14371 / CIP 107618 / JCM 11309 / KCTC 3954 / HTE831).